The primary structure comprises 561 residues: MRLWKSMAWGILLWHSQSGALCPAWPPARAAEEITRLQQQLADWNDIYWKQGVSAVDDSVYDQLSARLVQWQRCVGQDVSSTPVSPPLNGTTMHPVAHTGVRKLADRQVVEQWMRGRSELWVQPKVDGVAVTLVYQNGKLARAISRGNGLQGEDWTPKIRLIPSIPQSTQGALANAVLQGEIFLQREGHIQQRMGGMNARSKVAGMLMRQDNASALNSLGIFIWAWPDGPANMPERLSQLAKAGFSLTKKYSLVVKDASEVERARQSWLTSALPFVTDGVVIRMAKEPASQYWRPGQGDWLAAWKYPPVAQVAQVSAIQFSVGKSGKITVVASLVPVILDDKRVQRVNIGSVKRWEAWDIAPGDQILVSLAGQGIPRLDEVVWRSRERSKPVPPDSHFNSLTCFYASATCQEQFISRLIWLGSRSALGLDGMGEASWRALHQTHRFEHIFSWLTLTSAQIANTPGFAKGKSEQIWRQFNLARRQPFTRWIMAMDIPLTQAALQASGDRSWEQLLMRTEQHWRQLPATGERRAGRVIDWRNNLQIKALSRWLAAQHIPGFGS.

The active-site N6-AMP-lysine intermediate is the lysine 125.

This sequence belongs to the NAD-dependent DNA ligase family. LigB subfamily.

The enzyme catalyses NAD(+) + (deoxyribonucleotide)n-3'-hydroxyl + 5'-phospho-(deoxyribonucleotide)m = (deoxyribonucleotide)n+m + AMP + beta-nicotinamide D-nucleotide.. Its function is as follows. Catalyzes the formation of phosphodiester linkages between 5'-phosphoryl and 3'-hydroxyl groups in double-stranded DNA using NAD as a coenzyme and as the energy source for the reaction. The polypeptide is DNA ligase B (Salmonella newport (strain SL254)).